Reading from the N-terminus, the 284-residue chain is UPF0276 protein Ping_0944 (284 aa).

This sequence belongs to the UPF0276 family.

In Psychromonas ingrahamii (strain DSM 17664 / CCUG 51855 / 37), this protein is UPF0276 protein Ping_0944.